Here is a 216-residue protein sequence, read N- to C-terminus: ATP-dependent Clp protease proteolytic subunit 3 (216 aa).

The active-site Nucleophile is the serine 120. Histidine 145 is a catalytic residue.

This sequence belongs to the peptidase S14 family. Fourteen ClpP subunits assemble into 2 heptameric rings which stack back to back to give a disk-like structure with a central cavity, resembling the structure of eukaryotic proteasomes.

The protein localises to the cytoplasm. It catalyses the reaction Hydrolysis of proteins to small peptides in the presence of ATP and magnesium. alpha-casein is the usual test substrate. In the absence of ATP, only oligopeptides shorter than five residues are hydrolyzed (such as succinyl-Leu-Tyr-|-NHMec, and Leu-Tyr-Leu-|-Tyr-Trp, in which cleavage of the -Tyr-|-Leu- and -Tyr-|-Trp bonds also occurs).. Cleaves peptides in various proteins in a process that requires ATP hydrolysis. Has a chymotrypsin-like activity. Plays a major role in the degradation of misfolded proteins. The protein is ATP-dependent Clp protease proteolytic subunit 3 of Prochlorococcus marinus (strain SARG / CCMP1375 / SS120).